The primary structure comprises 213 residues: Imidazole glycerol phosphate synthase subunit HisH 1 (213 aa).

Residues 3–213 (SVSILDYGVG…LSIIQQFLQI (211 aa)) enclose the Glutamine amidotransferase type-1 domain. Cys-81 (nucleophile) is an active-site residue. Active-site residues include His-195 and Glu-197.

Heterodimer of HisH and HisF.

The protein resides in the cytoplasm. The catalysed reaction is 5-[(5-phospho-1-deoxy-D-ribulos-1-ylimino)methylamino]-1-(5-phospho-beta-D-ribosyl)imidazole-4-carboxamide + L-glutamine = D-erythro-1-(imidazol-4-yl)glycerol 3-phosphate + 5-amino-1-(5-phospho-beta-D-ribosyl)imidazole-4-carboxamide + L-glutamate + H(+). It catalyses the reaction L-glutamine + H2O = L-glutamate + NH4(+). It functions in the pathway amino-acid biosynthesis; L-histidine biosynthesis; L-histidine from 5-phospho-alpha-D-ribose 1-diphosphate: step 5/9. In terms of biological role, IGPS catalyzes the conversion of PRFAR and glutamine to IGP, AICAR and glutamate. The HisH subunit provides the glutamine amidotransferase activity that produces the ammonia necessary to HisF for the synthesis of IGP and AICAR. The chain is Imidazole glycerol phosphate synthase subunit HisH 1 from Legionella pneumophila (strain Lens).